A 651-amino-acid chain; its full sequence is Protein cueball (651 aa).

The signal sequence occupies residues Met1 to Gly21. The Extracellular portion of the chain corresponds to Ile22–Gly540. N-linked (GlcNAc...) asparagine glycosylation is found at Asn77, Asn102, and Asn114. LDL-receptor class B repeat units lie at residues Arg115–Gly162, Arg163–Ala207, and Lys208–Ala253. Asn183 is a glycosylation site (N-linked (GlcNAc...) asparagine). Residues Val290–Glu311 are disordered. The N-linked (GlcNAc...) asparagine glycan is linked to Asn324. EGF-like domains are found at residues Gln374 to Glu408, Thr409 to Glu440, and Glu443 to Glu480. 7 disulfides stabilise this stretch: Cys383-Cys396, Cys398-Cys407, Cys412-Cys421, Cys416-Cys431, Cys447-Cys457, Cys451-Cys468, and Cys470-Cys479. Asn482 and Asn499 each carry an N-linked (GlcNAc...) asparagine glycan. Residues Ser541–Ile561 form a helical membrane-spanning segment. Residues His562 to Tyr651 lie on the Cytoplasmic side of the membrane.

The protein belongs to the cueball family.

The protein localises to the cell membrane. Has a role in spermatogenesis and oogenesis. The chain is Protein cueball from Drosophila willistoni (Fruit fly).